The following is a 188-amino-acid chain: Protein-L-isoaspartate O-methyltransferase (188 aa).

Ser-33 is an active-site residue.

Belongs to the methyltransferase superfamily. L-isoaspartyl/D-aspartyl protein methyltransferase family.

It is found in the cytoplasm. The catalysed reaction is [protein]-L-isoaspartate + S-adenosyl-L-methionine = [protein]-L-isoaspartate alpha-methyl ester + S-adenosyl-L-homocysteine. In terms of biological role, catalyzes the methyl esterification of L-isoaspartyl residues in peptides and proteins that result from spontaneous decomposition of normal L-aspartyl and L-asparaginyl residues. It plays a role in the repair and/or degradation of damaged proteins. The protein is Protein-L-isoaspartate O-methyltransferase of Methanocella arvoryzae (strain DSM 22066 / NBRC 105507 / MRE50).